A 196-amino-acid chain; its full sequence is MEGIRRAAQRAAEEFLQAFPMAPGSLFVLGGSTSEVLGERVGTRPSLEAAHAVLEGLLPPLLERGVHVAVQACEHLNRALVVERETARAFGLEEVAVFPHPKAGGALATAAFLRFRDPVMVESLKAQAHGGMDIGGVLIGMHLRPVAVPLRLSVRKIGEAVLLAAKTRPKLVGGARAVYTREEMLKKLEEFLPKPP.

Belongs to the UPF0340 family.

The polypeptide is UPF0340 protein TTHA0583 (Thermus thermophilus (strain ATCC 27634 / DSM 579 / HB8)).